A 304-amino-acid polypeptide reads, in one-letter code: Hairy/enhancer-of-split related with YRPW motif protein 1 (304 aa).

The disordered stretch occupies residues M1–R52. Residues E28 to I47 are compositionally biased toward polar residues. A transcriptional repression and interaction with NCOR1 and SIN3A region spans residues L48–A117. Positions A49 to L104 constitute a bHLH domain. Residues Y122 to L158 form the Orange domain. Residues L196–S234 are disordered. Positions G200–P210 are enriched in polar residues. The YRPW motif motif lies at Y294–W297.

It belongs to the HEY family. Self-associates. Interacts with HES1 and HEYL. Interacts with HDAC1, NCOR1 and SIN3A. Interacts with GATA4 and GATA6. Interacts with CCDC89/BOIP. As to expression, expressed in the somitic mesoderm, the central nervous system, the kidney, the heart, nasal epithelium, and limbs.

The protein localises to the nucleus. Transcriptional repressor which binds preferentially to the canonical E box sequence 5'-CACGTG-3'. Downstream effector of Notch signaling required for cardiovascular development. Specifically required for the Notch-induced endocardial epithelial to mesenchymal transition, which is itself criticial for cardiac valve and septum development. May be required in conjunction with HEY2 to specify arterial cell fate or identity. Promotes maintenance of neuronal precursor cells and glial versus neuronal fate specification. Represses transcription by the cardiac transcriptional activators GATA4 and GATA6 and by the neuronal bHLH factors ASCL1/MASH1 and NEUROD4/MATH3. Involved in the regulation of liver cancer cells self-renewal. This is Hairy/enhancer-of-split related with YRPW motif protein 1 (HEY1) from Homo sapiens (Human).